A 284-amino-acid chain; its full sequence is Nucleotide-binding protein NMC0691 (284 aa).

Residue 8-15 (GLSGSGKS) coordinates ATP. Position 58-61 (58-61 (DVRS)) interacts with GTP.

The protein belongs to the RapZ-like family.

In terms of biological role, displays ATPase and GTPase activities. This Neisseria meningitidis serogroup C / serotype 2a (strain ATCC 700532 / DSM 15464 / FAM18) protein is Nucleotide-binding protein NMC0691.